Consider the following 222-residue polypeptide: Polyadenylate-binding protein 2 (222 aa).

Positions 1-43 (MTDNNNGEIVEDKDNEKLKGEDNINNHISNHNNTEETSFEDPE) are disordered. Over residues 10 to 24 (VEDKDNEKLKGEDNI) the composition is skewed to basic and acidic residues. Residues 101–178 (RSVYVGNVDY…RQLKITPKRT (78 aa)) form the RRM domain.

The protein resides in the nucleus. In terms of biological role, involved in the 3'-end formation of mRNA precursors (pre-mRNA) by the addition of a poly(A) tail of 200-250 nt to the upstream cleavage product. The chain is Polyadenylate-binding protein 2 (pabpn1) from Dictyostelium discoideum (Social amoeba).